A 620-amino-acid chain; its full sequence is Cryptochrome-1 (620 aa).

The Photolyase/cryptochrome alpha/beta domain maps to 3 to 132; that stretch reads VNAVHWFRKG…EVIVRISHTL (130 aa). 3 short sequence motifs (LIR) span residues 50-54, 82-87, and 151-156; these read NRWRF, DVFPRL, and KRFQTL. Ser-252 lines the FAD pocket. 4 consecutive short sequence motifs (LIR) follow at residues 255–260, 271–276, 285–290, and 335–339; these read LRFGCL, DLYKKV, SLYGQL, and TGFPW. Gln-289 serves as a coordination point for FAD. His-355 is a binding site for FAD. An LIR 8 motif is present at residues 379–384; it reads KVFEEL. Residue 387–389 participates in FAD binding; the sequence is DAD. 5 short sequence motifs (LIR) span residues 395 to 400, 411 to 416, 430 to 435, 486 to 491, and 492 to 497; these read GSWMWL, HCYCPV, RRYLPV, QIYQQL, and SRYRGL. Residues 593-620 are disordered; the sequence is TGISAGKRPNPEEETQSVGPKVQRQSTN.

The protein belongs to the DNA photolyase class-1 family. In terms of assembly, component of the circadian core oscillator, which includes the CRY proteins, CLOCK or NPAS2, BMAL1 or BMAL2, CSNK1E, and the PER proteins. Requires FAD as cofactor. (6R)-5,10-methylene-5,6,7,8-tetrahydrofolate serves as cofactor. As to expression, expressed in the retina.

The protein resides in the cytoplasm. It localises to the nucleus. Transcriptional repressor which forms a core component of the circadian clock. The circadian clock, an internal time-keeping system, regulates various physiological processes through the generation of approximately 24 hour circadian rhythms in gene expression, which are translated into rhythms in metabolism and behavior. It is derived from the Latin roots 'circa' (about) and 'diem' (day) and acts as an important regulator of a wide array of physiological functions including metabolism, sleep, body temperature, blood pressure, endocrine, immune, cardiovascular, and renal function. Consists of two major components: the central clock, residing in the suprachiasmatic nucleus (SCN) of the brain, and the peripheral clocks that are present in nearly every tissue and organ system. Both the central and peripheral clocks can be reset by environmental cues, also known as Zeitgebers (German for 'timegivers'). The predominant Zeitgeber for the central clock is light, which is sensed by retina and signals directly to the SCN. The central clock entrains the peripheral clocks through neuronal and hormonal signals, body temperature and feeding-related cues, aligning all clocks with the external light/dark cycle. Circadian rhythms allow an organism to achieve temporal homeostasis with its environment at the molecular level by regulating gene expression to create a peak of protein expression once every 24 hours to control when a particular physiological process is most active with respect to the solar day. Transcription and translation of core clock components (CLOCK, NPAS2, BMAL1, BMAL2, PER1, PER2, PER3, CRY1 and CRY2) plays a critical role in rhythm generation, whereas delays imposed by post-translational modifications (PTMs) are important for determining the period (tau) of the rhythms (tau refers to the period of a rhythm and is the length, in time, of one complete cycle). A diurnal rhythm is synchronized with the day/night cycle, while the ultradian and infradian rhythms have a period shorter and longer than 24 hours, respectively. Disruptions in the circadian rhythms contribute to the pathology of cardiovascular diseases, cancer, metabolic syndromes and aging. A transcription/translation feedback loop (TTFL) forms the core of the molecular circadian clock mechanism. Transcription factors, CLOCK or NPAS2 and BMAL1 or BMAL2, form the positive limb of the feedback loop, act in the form of a heterodimer and activate the transcription of core clock genes and clock-controlled genes (involved in key metabolic processes), harboring E-box elements (5'-CACGTG-3') within their promoters. The core clock genes: PER1/2/3 and CRY1/2 which are transcriptional repressors form the negative limb of the feedback loop and interact with the CLOCK|NPAS2-BMAL1|BMAL2 heterodimer inhibiting its activity and thereby negatively regulating their own expression. This heterodimer also activates nuclear receptors NR1D1/2 and RORA/B/G, which form a second feedback loop and which activate and repress BMAL1 transcription, respectively. CRY1 and CRY2 have redundant functions but also differential and selective contributions at least in defining the pace of the SCN circadian clock and its circadian transcriptional outputs. More potent transcriptional repressor in cerebellum and liver than CRY2, though more effective in lengthening the period of the SCN oscillator. On its side, CRY2 seems to play a critical role in tuning SCN circadian period by opposing the action of CRY1. With CRY2, is dispensable for circadian rhythm generation but necessary for the development of intercellular networks for rhythm synchrony. Capable of translocating circadian clock core proteins such as PER proteins to the nucleus. Interacts with CLOCK-BMAL1 independently of PER proteins and is found at CLOCK-BMAL1-bound sites, suggesting that CRY may act as a molecular gatekeeper to maintain CLOCK-BMAL1 in a poised and repressed state until the proper time for transcriptional activation. In Erithacus rubecula (European robin), this protein is Cryptochrome-1 (CRY1).